Here is a 493-residue protein sequence, read N- to C-terminus: Glutamyl-tRNA(Gln) amidotransferase subunit A (493 aa).

Residues lysine 79 and serine 159 each act as charge relay system in the active site. Serine 183 acts as the Acyl-ester intermediate in catalysis.

Belongs to the amidase family. GatA subfamily. As to quaternary structure, heterotrimer of A, B and C subunits.

The enzyme catalyses L-glutamyl-tRNA(Gln) + L-glutamine + ATP + H2O = L-glutaminyl-tRNA(Gln) + L-glutamate + ADP + phosphate + H(+). Functionally, allows the formation of correctly charged Gln-tRNA(Gln) through the transamidation of misacylated Glu-tRNA(Gln) in organisms which lack glutaminyl-tRNA synthetase. The reaction takes place in the presence of glutamine and ATP through an activated gamma-phospho-Glu-tRNA(Gln). This Brucella anthropi (strain ATCC 49188 / DSM 6882 / CCUG 24695 / JCM 21032 / LMG 3331 / NBRC 15819 / NCTC 12168 / Alc 37) (Ochrobactrum anthropi) protein is Glutamyl-tRNA(Gln) amidotransferase subunit A.